A 374-amino-acid polypeptide reads, in one-letter code: Glutamine synthetase (374 aa).

The tract at residues 2 to 25 is required for glutamine-induced ubiquitination by CRL4(CRBN) and proteasomal degradation; the sequence is TTSASSHLNKGIKQVYMSLPQGEK. N6-acetyllysine is present on residues lysine 11 and lysine 14. The region spanning 24-106 is the GS beta-grasp domain; sequence EKVQAMYIWI…VLCESFQVQF (83 aa). One can recognise a GS catalytic domain in the interval 114–374; sequence LRHTCKRIMD…TGDEPFQYKN (261 aa). Glutamate 135 is a binding site for ATP. Residues glutamate 135, glutamate 137, glutamate 197, and glutamate 204 each coordinate Mn(2+). 204–209 is an ATP binding site; sequence EFQIGP. 247–248 provides a ligand contact to L-glutamate; it reads NW. Histidine 254 provides a ligand contact to Mn(2+). Residues 256–258, arginine 320, and arginine 325 contribute to the ATP site; that span reads NFS. Arginine 320 contacts L-glutamate. An ADP-binding site is contributed by 337–339; that stretch reads YFE. Glutamate 339 provides a ligand contact to Mn(2+). Arginine 341 serves as a coordination point for L-glutamate. Serine 344 is modified (phosphoserine).

The protein belongs to the glutamine synthetase family. Decamer; composed of two pentamers. Interacts with PALMD. Interacts with RHOJ. Interacts with BEST2; this interaction tethers a fraction of GLUL to the membrane, causing a decrease of cytosolic glutamine synthase (GS) activity and inhibits the chloride channel activity of BEST2 by affecting the gating at the aperture in the absence of intracellular glutamate. Mg(2+) serves as cofactor. Requires Mn(2+) as cofactor. Palmitoylated; undergoes autopalmitoylation. Post-translationally, acetylated by EP300/p300; acetylation is stimulated by increased glutamine levels and promotes ubiquitin-mediated proteasomal degradation. In terms of processing, ubiquitinated by ZNRF1. Ubiquitinated by the DCX (DDB1-CUL4-X-box) E3 ubiquitin-protein ligase complex called CRL4(CRBN), leading to proteasomal degradation.

It localises to the cytoplasm. Its subcellular location is the cytosol. The protein resides in the microsome. It is found in the mitochondrion. The protein localises to the cell membrane. It catalyses the reaction L-glutamate + NH4(+) + ATP = L-glutamine + ADP + phosphate + H(+). The enzyme catalyses L-cysteinyl-[protein] + hexadecanoyl-CoA = S-hexadecanoyl-L-cysteinyl-[protein] + CoA. With respect to regulation, glutamine synthetase activity is inhibited by methionine sulfoximine (MSO). In terms of biological role, glutamine synthetase that catalyzes the ATP-dependent conversion of glutamate and ammonia to glutamine. Its role depends on tissue localization: in the brain, it regulates the levels of toxic ammonia and converts neurotoxic glutamate to harmless glutamine, whereas in the liver, it is one of the enzymes responsible for the removal of ammonia. Plays a key role in ammonium detoxification during erythropoiesis: the glutamine synthetase activity is required to remove ammonium generated by porphobilinogen deaminase (HMBS) during heme biosynthesis to prevent ammonium accumulation and oxidative stress. Essential for proliferation of fetal skin fibroblasts. Independently of its glutamine synthetase activity, required for endothelial cell migration during vascular development. Involved in angiogenesis by regulating membrane localization and activation of the GTPase RHOJ, possibly by promoting RHOJ palmitoylation. May act as a palmitoyltransferase for RHOJ: able to autopalmitoylate and then transfer the palmitoyl group to RHOJ. Plays a role in ribosomal 40S subunit biogenesis. Through the interaction with BEST2, inhibits BEST2 channel activity by affecting the gating at the aperture in the absence of intracellular L-glutamate, but sensitizes BEST2 to intracellular L-glutamate, which promotes the opening of BEST2 and thus relieves its inhibitory effect on BEST2. This Macaca fascicularis (Crab-eating macaque) protein is Glutamine synthetase.